The primary structure comprises 671 residues: ATP-dependent zinc metalloprotease FtsH (671 aa).

Topologically, residues 1–22 (MANPNNNNDNKQNNNNNFFNDN) are cytoplasmic. A helical transmembrane segment spans residues 23 to 43 (PLLAFAIFSIVIILIFKSFVG). Over 44-130 (EGESLGTMMN…ISYEGVVGNG (87 aa)) the chain is Periplasmic. Residues 131-151 (FFSELISMMLPILIFFAIWIF) form a helical membrane-spanning segment. Topologically, residues 152–671 (LAKKMSKGMG…SEESDNNKEA (520 aa)) are cytoplasmic. An ATP-binding site is contributed by 224-231 (GPPGTGKT). Position 447 (His447) interacts with Zn(2+). Glu448 is an active-site residue. The Zn(2+) site is built by His451 and Asp525. The interval 630 to 671 (EKGMPSRLAHKDKVAKNKAEADKKEEALKKEISEESDNNKEA) is disordered.

In the central section; belongs to the AAA ATPase family. It in the C-terminal section; belongs to the peptidase M41 family. As to quaternary structure, homohexamer. Requires Zn(2+) as cofactor.

Its subcellular location is the cell inner membrane. Functionally, acts as a processive, ATP-dependent zinc metallopeptidase for both cytoplasmic and membrane proteins. Plays a role in the quality control of integral membrane proteins. The protein is ATP-dependent zinc metalloprotease FtsH of Sulfurovum sp. (strain NBC37-1).